A 542-amino-acid polypeptide reads, in one-letter code: MSDAEDSDSIVNEFVTAIVRESDKFAKVHSYPMQYGTGGYRADAELLSSVAFRTGVIASFLSAKLHGQPVGLMVTASHNASSENGLKIVNILSSLDSSKWEAYLDQVVNADSADELTVCLTSILKKAKIIPGSEARVFVGYDSRSTSEILAQAVIDGIVVCKAKYENFGLLTTPQLHYMVKASQTYGTPDAIGEPTERGYFEKLSKAYQSLMTGKKIKGTVLIDAANGVGAAKIKELAKYIDPKLFPIEIVNDNIDNPELLNNSCGADFVRTQQKPPNGISAPKHARCASFDGDADRIVYFAFGSHSFHLLDGDKICALFAQFLIDLIRSTGLDLQVGIVQTAYANGASTAFFQKTLKVPVLCVSPGLKHLYHAAQAYDVGVFFEANGHGTILVSHAALSKIISHEVLSPAQFNALKTLKTVFELINQTDGDAITNLLLVEVILAHKNCTLKEWNQLYSEIPSRLIRCEVEDRSIYTTTDAEQKLVTPEGLQEKIDALVAKYTGGRAFVRSSGTEDAVRVYAEASSRGESEDLALRIVELLH.

Serine 77 (phosphoserine intermediate) is an active-site residue. Mg(2+) is bound at residue serine 77. A phosphoserine mark is found at serine 77 and serine 82. Positions 292, 294, and 296 each coordinate Mg(2+). Substrate is bound by residues 385 to 387 (EAN), 510 to 514 (RSSGT), and arginine 519.

It belongs to the phosphohexose mutase family. Mg(2+) is required as a cofactor.

It is found in the cytoplasm. The protein localises to the nucleus. The enzyme catalyses N-acetyl-alpha-D-glucosamine 1-phosphate = N-acetyl-D-glucosamine 6-phosphate. It participates in nucleotide-sugar biosynthesis; UDP-N-acetyl-alpha-D-glucosamine biosynthesis; N-acetyl-alpha-D-glucosamine 1-phosphate from alpha-D-glucosamine 6-phosphate (route I): step 2/2. Functionally, catalyzes the conversion of GlcNAc-6-P into GlcNAc-1-P during the synthesis of uridine diphosphate/UDP-GlcNAc, which is a biosynthetic precursor of chitin and also supplies the amino sugars for N-linked oligosaccharides of glycoproteins. In Schizosaccharomyces pombe (strain 972 / ATCC 24843) (Fission yeast), this protein is Phosphoacetylglucosamine mutase 2.